The chain runs to 390 residues: ATP-sensitive inward rectifier potassium channel 11 (390 aa).

Residues Met1 to Asp65 lie on the Cytoplasmic side of the membrane. Positions 48 and 50 each coordinate ATP. Residues Leu66–Leu92 form a helical membrane-spanning segment. The Extracellular portion of the chain corresponds to Ile93–Ser116. A disulfide bridge links Cys110 with Cys142. The segment at residues Phe117 to Phe133 is an intramembrane region (discontinuously helical; Pore-forming). Positions 130 and 133 each coordinate K(+). The Selectivity filter signature appears at Thr130 to Gly135. Residues Gly134 to Cys142 lie on the Extracellular side of the membrane. The chain crosses the membrane as a helical span at residues Pro143–Thr171. The Cytoplasmic portion of the chain corresponds to Ser172–Ser390. Residue Arg176 participates in a 1,2-diacyl-sn-glycero-3-phospho-(1D-myo-inositol-4,5-bisphosphate) binding. Tyr330 contacts ATP. Residue Thr341 is modified to Phosphothreonine; by MAPK1. At Ser385 the chain carries Phosphoserine; by MAPK1.

It belongs to the inward rectifier-type potassium channel (TC 1.A.2.1) family. KCNJ11 subfamily. In terms of assembly, homotetramer; the homotetramer binds four ATP molecules (one ATP per subunit). Forms an heterooctamer with ABCC8/SUR1; one KCNJ11 homotetramer interacts with four ABCC8/SUR1 molecules. Interacts with ABCC9/SUR2. In terms of processing, phosphorylation by MAPK1 results in changes in channel gating that destabilize the closed states and reduce the ATP sensitivity.

The protein localises to the membrane. The enzyme catalyses K(+)(in) = K(+)(out). With respect to regulation, KATP channels are regulated by cytoplasmic ATP/ADP ratios; ATP inhibits the channel by closing the pore, while ADP activates the channel. Activated by phosphatidylinositol 4,5-biphosphate (PtdIns(4,5)P2). Functionally, inward rectifier potassium channel that forms the pore of ATP-sensitive potassium channels (KATP), regulating potassium permeability as a function of cytoplasmic ATP and ADP concentrations in many different cells. Inward rectifier potassium channels are characterized by a greater tendency to allow potassium to flow into the cell rather than out of it. Their voltage dependence is regulated by the concentration of extracellular potassium; as external potassium is raised, the voltage range of the channel opening shifts to more positive voltages. The inward rectification is mainly due to the blockage of outward current by internal magnesium. Can be blocked by extracellular barium. In pancreatic cells, it forms KATP channels with ABCC8/SUR1. Can form cardiac and smooth muscle-type KATP channels with ABCC9. The polypeptide is ATP-sensitive inward rectifier potassium channel 11 (KCNJ11) (Cavia porcellus (Guinea pig)).